A 405-amino-acid polypeptide reads, in one-letter code: MQYLILSLIFLIPSLGMLTGLSIAATVAFFLLSIIITGFISFIQKQEFNKKFFIKLYPRFGFDDIFCIINKIKTELLFTAWCFISCLFAVHPINSLVTFTKVFVLLFLRFVSNAVTFQNVLYIKNSLILGIITAILLFFIEYSSHGFLTRMFKTHFGLYMLDRGCALLSITTWVAIIILFSNGHNINSFILYIVVLYLLSISDSLASFLGFSIGGIIFILARLIKTIFFKLITISLITGSLLFPVIAKQIDPQNLSEKYLATQPSAAHRLFIWHFVANKIIIRPILGYGFASSKYIETGDNAMIDYRGEKLHPLPLHPHNNILQITLELGILGLALFLCLVYKYLKEIDNIKVSNFRAASYSCFINYYIIGMISYNIWQTWWILSGIWILVLMKLLVKPDIIIDN.

Transmembrane regions (helical) follow at residues 23–43 (IAAT…ISFI), 77–97 (LFTA…NSLV), 120–140 (VLYI…LFFI), 156–178 (FGLY…AIII), 201–221 (ISDS…FILA), 227–247 (IFFK…PVIA), 270–290 (LFIW…GYGF), 322–342 (ILQI…CLVY), 353–375 (VSNF…MISY), and 377–397 (IWQT…KLLV).

Belongs to the O-antigen ligase family.

The protein resides in the membrane. This chain is Putative polysaccharide ligase RP358, found in Rickettsia prowazekii (strain Madrid E).